Reading from the N-terminus, the 530-residue chain is UPF0422 protein lpp3030 (530 aa).

Positions 1 to 19 (MKFKKIILALACLSSPLYA) are cleaved as a signal peptide. The stretch at 20-66 (DQDQQLKSEIQRLQHQAEDLQAQLNRLQKQLANHKSSQQKHEQQAAA) forms a coiled coil. A disordered region spans residues 50 to 81 (LANHKSSQQKHEQQAAAKPAEPKSKPTTKSGA). Low complexity predominate over residues 63–79 (QAAAKPAEPKSKPTTKS).

It belongs to the UPF0422 family.

The chain is UPF0422 protein lpp3030 from Legionella pneumophila (strain Paris).